We begin with the raw amino-acid sequence, 87 residues long: Stannin (87 aa).

The Mitochondrial intermembrane portion of the chain corresponds to 1–10; the sequence is MSIMDHSPTT. The helical transmembrane segment at 11 to 31 threads the bilayer; it reads GVVTVIVILIAIAALGALILG. The Cytoplasmic segment spans residues 32 to 87; it reads CWCYLRLQRISQSEDEESIVGDGETKEPFLLVQYSAKGPCVERKAKLTPNGPEVHS. Residue S49 is modified to Phosphoserine.

This sequence belongs to the stannin family. As to quaternary structure, monomer.

The protein resides in the mitochondrion outer membrane. Functionally, plays a role in the toxic effects of organotins. Plays a role in endosomal maturation. This chain is Stannin (SNN), found in Bos taurus (Bovine).